A 352-amino-acid polypeptide reads, in one-letter code: Protein RecA (352 aa).

74–81 (GPESSGKT) contacts ATP.

The protein belongs to the RecA family.

It localises to the cytoplasm. Its function is as follows. Can catalyze the hydrolysis of ATP in the presence of single-stranded DNA, the ATP-dependent uptake of single-stranded DNA by duplex DNA, and the ATP-dependent hybridization of homologous single-stranded DNAs. It interacts with LexA causing its activation and leading to its autocatalytic cleavage. This chain is Protein RecA, found in Ralstonia nicotianae (strain ATCC BAA-1114 / GMI1000) (Ralstonia solanacearum).